Here is a 274-residue protein sequence, read N- to C-terminus: Phosphate import ATP-binding protein PstB (274 aa).

Positions 28 to 269 (VTVRDLNFYY…PNDRRTQDYI (242 aa)) constitute an ABC transporter domain. 60–67 (GPSGCGKS) serves as a coordination point for ATP.

This sequence belongs to the ABC transporter superfamily. Phosphate importer (TC 3.A.1.7) family. As to quaternary structure, the complex is composed of two ATP-binding proteins (PstB), two transmembrane proteins (PstC and PstA) and a solute-binding protein (PstS).

The protein localises to the cell inner membrane. It carries out the reaction phosphate(out) + ATP + H2O = ADP + 2 phosphate(in) + H(+). Functionally, part of the ABC transporter complex PstSACB involved in phosphate import. Responsible for energy coupling to the transport system. This chain is Phosphate import ATP-binding protein PstB, found in Rhodopseudomonas palustris (strain HaA2).